A 432-amino-acid polypeptide reads, in one-letter code: Adenylosuccinate synthetase (432 aa).

GTP is bound by residues 12 to 18 (GDEGKGK) and 40 to 42 (GHT). The active-site Proton acceptor is D13. Mg(2+) contacts are provided by D13 and G40. Residues 13–16 (DEGK), 38–41 (NAGH), T130, R144, Q225, T240, and R304 each bind IMP. The active-site Proton donor is the H41. Position 300 to 306 (300 to 306 (ATTGRPR)) interacts with substrate. Residues R306, 332–334 (KLD), and 414–416 (SVG) each bind GTP.

The protein belongs to the adenylosuccinate synthetase family. Homodimer. Mg(2+) serves as cofactor.

It is found in the cytoplasm. It carries out the reaction IMP + L-aspartate + GTP = N(6)-(1,2-dicarboxyethyl)-AMP + GDP + phosphate + 2 H(+). It participates in purine metabolism; AMP biosynthesis via de novo pathway; AMP from IMP: step 1/2. Its function is as follows. Plays an important role in the de novo pathway of purine nucleotide biosynthesis. Catalyzes the first committed step in the biosynthesis of AMP from IMP. The chain is Adenylosuccinate synthetase from Anaeromyxobacter sp. (strain K).